Here is a 189-residue protein sequence, read N- to C-terminus: MFKGIVQGVGIIKKISKNDDTQRHGITFPKDILDSVEKDTVMLVNGCSVTVVRITGDVVYFDIDQAINTTTFRKLEVGNKVNLEVRPGFGSLLGKGALTGNIKGVATVDNITEEEDLLKVYIKIPKDLIENISSEDHIGINGVSNSIEEVSNDIICINYPKNLSITTNLGTLETGSEVNVETLNVSNEW.

2 Lumazine-binding repeats span residues 1-96 and 97-189; these read MFKG…LGKG and ALTG…SNEW.

6,7-dimethyl-8-(1-D-ribityl)lumazine is required as a cofactor.

Antenna protein that modulates the color of the bioluminescence emission of the luciferase. In the presence of LumP, luciferase emission is shifted to higher energy values (shorter wavelength). The chain is Lumazine protein (luxL) from Photobacterium phosphoreum.